We begin with the raw amino-acid sequence, 336 residues long: Holliday junction branch migration complex subunit RuvB (336 aa).

Residues 4–185 (MDERLLSGES…FGVLSRLEYY (182 aa)) form a large ATPase domain (RuvB-L) region. ATP-binding positions include L24, R25, G66, K69, T70, T71, 132–134 (EDF), R175, Y185, and R222. T70 is a Mg(2+) binding site. A small ATPAse domain (RuvB-S) region spans residues 186 to 256 (TVDQLSAIVE…ITQMALELLQ (71 aa)). The head domain (RuvB-H) stretch occupies residues 259–336 (KLGLDHIDHK…EHFGMEMPKV (78 aa)). 2 residues coordinate DNA: R314 and R319.

This sequence belongs to the RuvB family. Homohexamer. Forms an RuvA(8)-RuvB(12)-Holliday junction (HJ) complex. HJ DNA is sandwiched between 2 RuvA tetramers; dsDNA enters through RuvA and exits via RuvB. An RuvB hexamer assembles on each DNA strand where it exits the tetramer. Each RuvB hexamer is contacted by two RuvA subunits (via domain III) on 2 adjacent RuvB subunits; this complex drives branch migration. In the full resolvosome a probable DNA-RuvA(4)-RuvB(12)-RuvC(2) complex forms which resolves the HJ.

It is found in the cytoplasm. The enzyme catalyses ATP + H2O = ADP + phosphate + H(+). The RuvA-RuvB-RuvC complex processes Holliday junction (HJ) DNA during genetic recombination and DNA repair, while the RuvA-RuvB complex plays an important role in the rescue of blocked DNA replication forks via replication fork reversal (RFR). RuvA specifically binds to HJ cruciform DNA, conferring on it an open structure. The RuvB hexamer acts as an ATP-dependent pump, pulling dsDNA into and through the RuvAB complex. RuvB forms 2 homohexamers on either side of HJ DNA bound by 1 or 2 RuvA tetramers; 4 subunits per hexamer contact DNA at a time. Coordinated motions by a converter formed by DNA-disengaged RuvB subunits stimulates ATP hydrolysis and nucleotide exchange. Immobilization of the converter enables RuvB to convert the ATP-contained energy into a lever motion, pulling 2 nucleotides of DNA out of the RuvA tetramer per ATP hydrolyzed, thus driving DNA branch migration. The RuvB motors rotate together with the DNA substrate, which together with the progressing nucleotide cycle form the mechanistic basis for DNA recombination by continuous HJ branch migration. Branch migration allows RuvC to scan DNA until it finds its consensus sequence, where it cleaves and resolves cruciform DNA. The chain is Holliday junction branch migration complex subunit RuvB from Bacillus thuringiensis (strain Al Hakam).